A 66-amino-acid chain; its full sequence is Scarabaecin (66 aa).

The N-terminal stretch at 1 to 26 (MKTLTFYTLLLCAALYSNFFDCKAVA) is a signal peptide. C46 and C57 are disulfide-bonded.

The protein resides in the secreted. Its function is as follows. Possesses antifungal activity against phytopathogenic fungi such as P.oryzae, R.solani and B.cinerea but not against phytopathogenic bacteria. Shows weak activity against the insect pathogenic fungus B.bassiana and against S.aureus. Binds chitin. This chain is Scarabaecin, found in Oryctes rhinoceros (Coconut rhinoceros beetle).